Reading from the N-terminus, the 105-residue chain is uncharacterized protein (105 aa).

This sequence belongs to the EspC family.

May be involved in assembly of the ESX-1 / type VII specialized secretion system (T7SS), which exports several proteins including EsxA and EsxB. Involved in DNA conjugation, in at least recipient strain. This is an uncharacterized protein from Mycolicibacterium smegmatis (strain MKD8) (Mycobacterium smegmatis).